The sequence spans 175 residues: Regenerating islet-derived protein 3-alpha (175 aa).

The N-terminal stretch at 1 to 26 (MLPHLVLNSISWMLLSCLLFVFQVQG) is a signal peptide. Positions 27 to 37 (EDFQKEVPSPR) are excised as a propeptide. Disulfide bonds link cysteine 40-cysteine 51, cysteine 68-cysteine 171, and cysteine 146-cysteine 163. A C-type lectin domain is found at 47-172 (YRSHCYALVM…CDGTLPFVCK (126 aa)). The Zn(2+) site is built by histidine 50, histidine 107, glutamate 121, and histidine 145. Positions 103 to 118 (WIGLHDPTMGQQPNGG) are sufficient to activate EXTL3.

Forms a hexameric membrane-permeabilizing oligomeric pore on membrane phospholipids. The hexamer is formed by three dimers related by helical symmetry. Forms filaments, filamentation traps pore complexes and limits damage to host cells. Interacts with EXTL3. In terms of processing, proteolytic processing by trypsin removes an inhibitory N-terminal propeptide and is essential for peptidoglycan binding and antibacterial activity. As to expression, small intestine and pancreas.

It is found in the secreted. In terms of biological role, bactericidal C-type lectin. The lack of the EPN motif may explain its inability to bind peptidoglycan. Acts as a hormone in response to different stimuli like anti-inflammatory signals, such as IL17A, or gut microbiome. Secreted by different cell types to activate its receptor EXTL3 and induce cell specific signaling pathways. Induced by IL17A in keratinocytes, regulates keratinocyte proliferation and differentiation after skin injury via activation of EXTL3-PI3K-AKT signaling pathway. In parallel, inhibits skin inflammation through the inhibition of inflammatory cytokines such as IL6 and TNF. In pancreas, is able to permealize beta-cells membrane and stimulate their proliferation. In Mus musculus (Mouse), this protein is Regenerating islet-derived protein 3-alpha (Reg3a).